Consider the following 305-residue polypeptide: Ornithine carbamoyltransferase, catabolic (305 aa).

Carbamoyl phosphate-binding positions include 50–53 (STRT), Gln77, Arg101, and 128–131 (HPLQ). Residues Asn159, Asp223, and 227–228 (SM) contribute to the L-ornithine site. Carbamoyl phosphate-binding positions include 263–264 (CL) and Arg291.

This sequence belongs to the aspartate/ornithine carbamoyltransferase superfamily. OTCase family.

Its subcellular location is the cytoplasm. The catalysed reaction is carbamoyl phosphate + L-ornithine = L-citrulline + phosphate + H(+). The protein operates within amino-acid degradation; L-arginine degradation via ADI pathway; carbamoyl phosphate from L-arginine: step 2/2. Functionally, reversibly catalyzes the transfer of the carbamoyl group from carbamoyl phosphate (CP) to the N(epsilon) atom of ornithine (ORN) to produce L-citrulline. The sequence is that of Ornithine carbamoyltransferase, catabolic from Thermoplasma volcanium (strain ATCC 51530 / DSM 4299 / JCM 9571 / NBRC 15438 / GSS1).